A 389-amino-acid chain; its full sequence is Phosphoglycerate kinase (389 aa).

Residues 21 to 23 (DLN), Arg36, 59 to 62 (HLGR), Arg112, and Arg145 each bind substrate. ATP contacts are provided by residues Lys196, Glu313, and 342–345 (GGDT).

This sequence belongs to the phosphoglycerate kinase family. In terms of assembly, monomer.

The protein localises to the cytoplasm. The enzyme catalyses (2R)-3-phosphoglycerate + ATP = (2R)-3-phospho-glyceroyl phosphate + ADP. Its pathway is carbohydrate degradation; glycolysis; pyruvate from D-glyceraldehyde 3-phosphate: step 2/5. The sequence is that of Phosphoglycerate kinase from Histophilus somni (strain 2336) (Haemophilus somnus).